The sequence spans 534 residues: Cytidylyl-2-hydroxyethylphosphonate methyltransferase (534 aa).

Positions 38–195 (KVLLLNPSAT…EHLNGNVSDD (158 aa)) constitute a B12-binding domain. Positions 268 to 496 (TVGSRVGQLY…TYKQGIINVP (229 aa)) constitute a Radical SAM core domain. [4Fe-4S] cluster is bound by residues Cys-282, Cys-286, and Cys-289.

It belongs to the radical SAM superfamily. The cofactor is [4Fe-4S] cluster. Requires methylcob(III)alamin as cofactor.

The catalysed reaction is cytidine 5'-{[hydroxy(2-hydroxyethyl)phosphonoyl]phosphate} + AH2 + 2 S-adenosyl-L-methionine = cytidine 5'-({hydroxy[(S)-2-hydroxypropyl]phosphonoyl}phosphate) + 5'-deoxyadenosine + L-methionine + A + S-adenosyl-L-homocysteine + 2 H(+). The protein operates within antibiotic biosynthesis; fosfomycin biosynthesis. Its function is as follows. Involved in fosfomycin biosynthesis. Catalyzes the C-methylation of cytidylyl-2-hydroxyethylphosphonate (HEP-CMP) to form cytidylyl-2-hydroxypropylphosphonate (HPP-CMP). The C-methylation is not stereoselective and the ratio of (S)- to (R)-HPP-CMP is almost equal in vitro. This is Cytidylyl-2-hydroxyethylphosphonate methyltransferase from Streptomyces wedmorensis.